The chain runs to 424 residues: Glutamate-1-semialdehyde 2,1-aminomutase (424 aa).

Lys263 carries the N6-(pyridoxal phosphate)lysine modification.

Belongs to the class-III pyridoxal-phosphate-dependent aminotransferase family. HemL subfamily. Homodimer. The cofactor is pyridoxal 5'-phosphate.

It is found in the cytoplasm. It catalyses the reaction (S)-4-amino-5-oxopentanoate = 5-aminolevulinate. It functions in the pathway porphyrin-containing compound metabolism; protoporphyrin-IX biosynthesis; 5-aminolevulinate from L-glutamyl-tRNA(Glu): step 2/2. The protein is Glutamate-1-semialdehyde 2,1-aminomutase of Campylobacter jejuni subsp. doylei (strain ATCC BAA-1458 / RM4099 / 269.97).